The chain runs to 883 residues: Valine--tRNA ligase (883 aa).

A 'HIGH' region motif is present at residues 46–56 (PNVTGKLHLGH). The short motif at 520–524 (KMSKS) is the 'KMSKS' region element. Lysine 523 provides a ligand contact to ATP. The stretch at 809 to 844 (LVDLLNVEEELARLEKELAKWQKELDMVGKKLSNER) forms a coiled coil.

Belongs to the class-I aminoacyl-tRNA synthetase family. ValS type 1 subfamily. As to quaternary structure, monomer.

It is found in the cytoplasm. The catalysed reaction is tRNA(Val) + L-valine + ATP = L-valyl-tRNA(Val) + AMP + diphosphate. Catalyzes the attachment of valine to tRNA(Val). As ValRS can inadvertently accommodate and process structurally similar amino acids such as threonine, to avoid such errors, it has a 'posttransfer' editing activity that hydrolyzes mischarged Thr-tRNA(Val) in a tRNA-dependent manner. This Streptococcus pneumoniae (strain ATCC BAA-255 / R6) protein is Valine--tRNA ligase.